A 98-amino-acid polypeptide reads, in one-letter code: DNA/RNA-binding protein Alba (98 aa).

An N6-acetyllysine modification is found at Lys-16.

This sequence belongs to the histone-like Alba family. Post-translationally, acetylated. Acetylation at Lys-16 decreases DNA-binding affinity.

Its subcellular location is the cytoplasm. The protein localises to the chromosome. In terms of biological role, binds double-stranded DNA tightly but without sequence specificity. Involved in DNA compaction. The polypeptide is DNA/RNA-binding protein Alba (Metallosphaera sedula (strain ATCC 51363 / DSM 5348 / JCM 9185 / NBRC 15509 / TH2)).